A 72-amino-acid polypeptide reads, in one-letter code: Translation initiation factor IF-1 (72 aa).

The S1-like domain maps to 1–72 (MAKEDVIEVE…TRGRITYRFK (72 aa)).

This sequence belongs to the IF-1 family. In terms of assembly, component of the 30S ribosomal translation pre-initiation complex which assembles on the 30S ribosome in the order IF-2 and IF-3, IF-1 and N-formylmethionyl-tRNA(fMet); mRNA recruitment can occur at any time during PIC assembly.

Its subcellular location is the cytoplasm. One of the essential components for the initiation of protein synthesis. Stabilizes the binding of IF-2 and IF-3 on the 30S subunit to which N-formylmethionyl-tRNA(fMet) subsequently binds. Helps modulate mRNA selection, yielding the 30S pre-initiation complex (PIC). Upon addition of the 50S ribosomal subunit IF-1, IF-2 and IF-3 are released leaving the mature 70S translation initiation complex. The chain is Translation initiation factor IF-1 from Listeria innocua serovar 6a (strain ATCC BAA-680 / CLIP 11262).